Reading from the N-terminus, the 224-residue chain is UPF0758 protein Pfl01_5539 (224 aa).

The 123-residue stretch at 102–224 (ALENPQVVRD…PLSMAECGWM (123 aa)) folds into the MPN domain. Residues H173, H175, and D186 each coordinate Zn(2+). Residues 173–186 (HNHPSGNSDPSQAD) carry the JAMM motif motif.

Belongs to the UPF0758 family.

This Pseudomonas fluorescens (strain Pf0-1) protein is UPF0758 protein Pfl01_5539.